A 229-amino-acid polypeptide reads, in one-letter code: Vacuolar protein sorting-associated protein 24 homolog 1 (229 aa).

Residues 15-60 (KQLLRDWQRKLRQECRNIERQIRDIQKEERNVQKAIKEAAKRNDMV) are a coiled coil. The interval 193-215 (VPAQKASTSREEEAVAEGVDDEE) is disordered. The segment covering 206–215 (AVAEGVDDEE) has biased composition (acidic residues).

This sequence belongs to the SNF7 family. As to quaternary structure, component of the endosomal sorting required for transport complex III (ESCRT-III), composed at least of VPS2, VPS20, VPS24 and VPS32. Interacts with SKD1.

Its subcellular location is the endosome. In terms of biological role, component of the ESCRT-III complex, which is required for multivesicular bodies (MVBs) formation and sorting of endosomal cargo proteins into MVBs. The ESCRT-III complex is probably involved in the concentration of MVB cargo. The protein is Vacuolar protein sorting-associated protein 24 homolog 1 (VPS24-1) of Arabidopsis thaliana (Mouse-ear cress).